The sequence spans 962 residues: Protein lin-36 (962 aa).

Disordered regions lie at residues 1 to 53 (MSEE…ETEG) and 74 to 99 (TSSGEVLDESQVTPTKQASSSQPREE). Residues 23–40 (DSHVTVHSVEQDSQHSGE) are compositionally biased toward basic and acidic residues. A compositionally biased stretch (polar residues) spans 74-95 (TSSGEVLDESQVTPTKQASSSQ). The THAP-type zinc-finger motif lies at 161–249 (LTHKPCTVCN…IEAFGVPVAI (89 aa)). Composition is skewed to basic and acidic residues over residues 452–472 (KAEESAQGTKEQESSQKKHAE) and 534–570 (SHEEEHDPTPESVEREPTVSPNDPRERLRLKERDEQF). Disordered regions lie at residues 452–575 (KAEE…KMVQ), 612–676 (IAAT…PEER), 744–788 (QEKG…SASS), and 932–962 (DPKWRELQQQQQQQQQQQEQFPGQGSSDSQQ). Over residues 626-637 (SSEQTPEPTTSQ) the composition is skewed to low complexity. Positions 647–658 (KTKESAVQKVEK) are enriched in basic and acidic residues. Low complexity predominate over residues 939 to 951 (QQQQQQQQQQQEQ). Residues 952 to 962 (FPGQGSSDSQQ) are compositionally biased toward polar residues.

As to expression, expressed in vulval precursor P(3-8).p cells and their descendants, neurons of the head, tail and ventral cord, hypodermal and intestinal cells and germline cells.

The protein resides in the nucleus. Functionally, required to negatively regulate vulval development. Antagonizes Ras-mediated vulval induction. Acts cell autonomously. The protein is Protein lin-36 (lin-36) of Caenorhabditis elegans.